The sequence spans 263 residues: uncharacterized protein (263 aa).

A disordered region spans residues 22–44 (IDGSDDQSDRTRSSSGDSTSNSL). A compositionally biased stretch (low complexity) spans 34-43 (SSSGDSTSNS).

The protein localises to the mitochondrion. This is an uncharacterized protein from Schizosaccharomyces pombe (strain 972 / ATCC 24843) (Fission yeast).